Here is a 207-residue protein sequence, read N- to C-terminus: MLISKTLIFYQVVNIVSQKGSGKRRWKMENGDRYVYVVDVSKCYGCLSCVAACAAENNVPVGYFRTWVERYAMNGRVAFVPKICNHCDNPSCVHACPVNATYKTEEGLVLIDDEICIGCGACIQACPYGARFRNPVKGTADKCTLCNHRIPERLPACVESCPTSARVYGKMSDKAVKEILSKKNAVVLKAYTGNEPHTYYVSLTGVE.

The signal sequence occupies residues 1-28 (MLISKTLIFYQVVNIVSQKGSGKRRWKM). 3 consecutive 4Fe-4S ferredoxin-type domains span residues 34–63 (YVYVVDVSKCYGCLSCVAACAAENNVPVGY), 75–106 (GRVAFVPKICNHCDNPSCVHACPVNATYKTEE), and 107–136 (GLVLIDDEICIGCGACIQACPYGARFRNPV). Residues cysteine 43, cysteine 46, cysteine 49, cysteine 53, cysteine 84, cysteine 87, cysteine 92, cysteine 96, cysteine 116, cysteine 119, cysteine 122, cysteine 126, cysteine 143, cysteine 146, cysteine 157, and cysteine 161 each contribute to the [4Fe-4S] cluster site.

As to quaternary structure, probably composed of three subunits: TtrA, TtrB and TtrC.

The protein localises to the cell membrane. Its function is as follows. Part of a membrane-bound tetrathionate reductase that catalyzes the reduction of tetrathionate to thiosulfate. TtrB is probably involved in transfer of electrons from TtrC to TtrA. The protein is Tetrathionate reductase subunit B (ttrB) of Archaeoglobus fulgidus (strain ATCC 49558 / DSM 4304 / JCM 9628 / NBRC 100126 / VC-16).